We begin with the raw amino-acid sequence, 144 residues long: UPF0225 protein RSc0270 (144 aa).

This sequence belongs to the UPF0225 family.

The sequence is that of UPF0225 protein RSc0270 from Ralstonia nicotianae (strain ATCC BAA-1114 / GMI1000) (Ralstonia solanacearum).